Reading from the N-terminus, the 548-residue chain is Sesquiterpene synthase 12 (548 aa).

The Mg(2+) site is built by Asp299, Asp303, Asp444, and Glu452. A DDXXD motif motif is present at residues Asp299–Asp303.

This sequence belongs to the terpene synthase family. Tpsa subfamily. Mg(2+) is required as a cofactor. Mn(2+) serves as cofactor. In terms of tissue distribution, mostly expressed in leaves, to a lower extent in stems, trichomes, flowers and roots and, at low levels, in fruits.

The enzyme catalyses (2E,6E)-farnesyl diphosphate = alpha-humulene + diphosphate. It carries out the reaction (2E,6E)-farnesyl diphosphate = (-)-(E)-beta-caryophyllene + diphosphate. The catalysed reaction is (2Z,6Z)-farnesyl diphosphate = beta-bisabolene + diphosphate. It catalyses the reaction (2E)-geranyl diphosphate = terpinolene + diphosphate. The enzyme catalyses (2E)-geranyl diphosphate = limonene + diphosphate. It carries out the reaction (2E)-geranyl diphosphate = beta-myrcene + diphosphate. The catalysed reaction is (2E)-geranyl diphosphate = (E)-beta-ocimene + diphosphate. It catalyses the reaction (2Z,6Z)-farnesyl diphosphate = gamma-curcumene + diphosphate. The enzyme catalyses (2Z,6Z)-farnesyl diphosphate = (Z)-gamma-bisabolene + diphosphate. It functions in the pathway secondary metabolite biosynthesis; terpenoid biosynthesis. In terms of biological role, sesquiterpene synthase involved in the biosynthesis of volatile compounds. Mediates the conversion of (2E,6E)-farnesyl diphosphate (FPP) into (1E,4E,8E)-alpha-humulene and (-)-(E)-beta-caryophyllene, and of (2Z,6Z)-farnesyl diphosphate ((ZZ)-FPP) into beta-bisabolene, gamma-curcumene and (Z)-gamma-bisabolene. Can act with a low efficiency as a monoterpene synthase with geranyl diphosphate (GPP) as substrate, thus producing beta-myrcene, (E)-beta-ocimene, limonene and terpinolene. The chain is Sesquiterpene synthase 12 from Solanum lycopersicum (Tomato).